Here is a 186-residue protein sequence, read N- to C-terminus: Large ribosomal subunit protein uL6 (186 aa).

The protein belongs to the universal ribosomal protein uL6 family. In terms of assembly, part of the 50S ribosomal subunit.

This protein binds to the 23S rRNA, and is important in its secondary structure. It is located near the subunit interface in the base of the L7/L12 stalk, and near the tRNA binding site of the peptidyltransferase center. In Hyperthermus butylicus (strain DSM 5456 / JCM 9403 / PLM1-5), this protein is Large ribosomal subunit protein uL6.